A 129-amino-acid polypeptide reads, in one-letter code: Large ribosomal subunit protein bL17 (129 aa).

Belongs to the bacterial ribosomal protein bL17 family. Part of the 50S ribosomal subunit. Contacts protein L32.

In Yersinia pseudotuberculosis serotype O:1b (strain IP 31758), this protein is Large ribosomal subunit protein bL17.